A 238-amino-acid chain; its full sequence is Urease subunit alpha (238 aa).

The urease gamma stretch occupies residues 1–102; the sequence is MKLTPKELDK…LVTVHTPIES (102 aa). The tract at residues 103-238 is urease beta; sequence KGKLVPGELF…DDNYVKTIKE (136 aa).

In the N-terminal section; belongs to the urease gamma subunit family. This sequence in the C-terminal section; belongs to the urease beta subunit family. Heterohexamer of 3 UreA (alpha) and 3 UreB (beta) subunits.

It localises to the cytoplasm. The catalysed reaction is urea + 2 H2O + H(+) = hydrogencarbonate + 2 NH4(+). It participates in nitrogen metabolism; urea degradation; CO(2) and NH(3) from urea (urease route): step 1/1. The chain is Urease subunit alpha from Helicobacter acinonychis (strain Sheeba).